The primary structure comprises 395 residues: GPI-anchor transamidase (395 aa).

The first 27 residues, 1 to 27 (MAAPCFLTLRVATLAALALLSLGSSAA), serve as a signal peptide directing secretion. Residues 28 to 368 (GHIEDQAEQF…PKPRDWHPPG (341 aa)) lie on the Lumenal side of the membrane. Ca(2+) is bound by residues Asp79, Ile82, Glu118, and Asp120. The Proton donor role is filled by His164. The active-site Nucleophile; acyl-thioester intermediate is Cys206. The a protein site is built by Cys206, Ser232, and Ser234. Residues 231-236 (DSLSHQ) are autoinhibitory loop. An intrachain disulfide couples Cys275 to Cys280. A helical membrane pass occupies residues 369 to 385 (GFILGLWALIIMVFFKT). At 386–395 (YGIKHMKFIF) the chain is on the cytoplasmic side.

This sequence belongs to the peptidase C13 family. As to quaternary structure, heteropentamer. Part of the GPI-anchor transamidase complex, consisting of PIGK, PIGT, PIGS, PIGU and GAA1. Interacts with GPAA1. Interacts with PIGT; this interaction, via a disulfide link, stabilizes the expression of GAA1 and PIGK and links them to PIGS. Post-translationally, the disulfide bond between PIGK/GPI8 and PIGT is important for normal enzyme activity.

It is found in the endoplasmic reticulum membrane. It participates in glycolipid biosynthesis; glycosylphosphatidylinositol-anchor biosynthesis. With respect to regulation, in the absence of proproteins substrates, exists in an inactive state with a disrupted catalytic site by an autoinhibitory loop. The binding of proprotein substrates, particularly the CSP region, to GPI-T triggers concerted conformational changes that alleviate the inhibition by the autoinhibitory loop. Meanwhile, proprotein residues near the omega- site induce the formation of a catalytic cleft for catalysis, following which the products are released and GPI-T reverts to the inactive state. Functionally, catalytic subunit of the glycosylphosphatidylinositol-anchor (GPI-anchor) transamidase (GPI-T) complex that catalyzes the formation of the linkage between a proprotein and a GPI-anchor and participates in GPI anchored protein biosynthesis. Recognizes diverse proproteins at a C-terminal signal peptide (CSP) region that lacks consensus sequence and replaces it with a GPI-anchor via a transamidation reaction. Transamidation catalysis reaction follows a two-phase mechanism. In the acyl-enzyme phase, the carbonyl group of the proproteins's omega-site undergoes a nucleophilic attack forming an enzyme-substrate thioester bond. Followed by a general acid catalysis that allows CSP releasing, regenerating the carbonyl, and forming the acyl-enzyme intermediate. In the GPI-anchor attachment phase, the amino group of the GPI-anchor's ethanolamine phosphate, the one on third mannose (EtNP3), mediates a nucleophilic attack on the carbonyl of the acyl-enzyme intermediate, replacing the CSP, allowing GPI-anchor attachment to the omega-residue, therefore forming the product and freeing the enzyme. This chain is GPI-anchor transamidase, found in Mus musculus (Mouse).